Reading from the N-terminus, the 122-residue chain is MDKNKKLQSKRLRRRRHVRNKLRGSADQPRLCIQRTLKHFACQVVDDQAGKTLLSASTRDKTVRDQVKAGGNCDAAALVGKLVAEKAAEAGVKTVKLDRGHNKYHGRVKAFADAAREAGLQF.

Residues 1–22 (MDKNKKLQSKRLRRRRHVRNKL) show a composition bias toward basic residues. Residues 1 to 25 (MDKNKKLQSKRLRRRRHVRNKLRGS) are disordered.

This sequence belongs to the universal ribosomal protein uL18 family. Part of the 50S ribosomal subunit; part of the 5S rRNA/L5/L18/L25 subcomplex. Contacts the 5S and 23S rRNAs.

This is one of the proteins that bind and probably mediate the attachment of the 5S RNA into the large ribosomal subunit, where it forms part of the central protuberance. This chain is Large ribosomal subunit protein uL18, found in Rhodopirellula baltica (strain DSM 10527 / NCIMB 13988 / SH1).